The chain runs to 623 residues: Glucokinase regulatory protein (623 aa).

2 consecutive SIS domains span residues 90 to 286 (VQEV…QGVV) and 320 to 476 (VGIS…VQKF). Residues 109–110 (TS), Glu-153, and 179–181 (SVG) contribute to the beta-D-fructose 1-phosphate site. 109 to 110 (TS) is a binding site for beta-D-fructose 6-phosphate. 179-181 (SVG) provides a ligand contact to beta-D-fructose 6-phosphate. The segment at 199–200 (AV) is important for interaction with GCK. Residue Glu-348 coordinates beta-D-fructose 1-phosphate. The essential for interaction with GCK stretch occupies residues 463-465 (LLF).

This sequence belongs to the GCKR family. In terms of assembly, interacts (fructose 6-phosphate bound form) with GCK.

The protein localises to the cytoplasm. It localises to the nucleus. It is found in the mitochondrion. In terms of biological role, regulates glucokinase (GCK) by forming an inactive complex with this enzyme. Acts by promoting GCK recruitment to the nucleus, possibly to provide a reserve of GCK that can be quickly released in the cytoplasm after a meal. The affinity of GCKR for GCK is modulated by fructose metabolites: GCKR with bound fructose 6-phosphate has increased affinity for GCK, while GCKR with bound fructose 1-phosphate has strongly decreased affinity for GCK and does not inhibit GCK activity. The chain is Glucokinase regulatory protein from Mus musculus (Mouse).